The chain runs to 1080 residues: Histone-lysine N-methyltransferase, H3 lysine-4 specific (1080 aa).

3 disordered regions span residues 1-46 (MSNY…SQYN), 54-73 (NDGTRRRYNDDRPHSSNNAS), and 78-121 (YATN…SSGS). Residues 1-230 (MSNYYRRAHA…THRKCRNSLI (230 aa)) are binds SWD2. The span at 11-28 (SSGSYRQPQEQPQYSRSG) shows a compositional bias: polar residues. Low complexity predominate over residues 29–46 (HYQYSNGHSHQQYSSQYN). Basic and acidic residues predominate over residues 54-67 (NDGTRRRYNDDRPH). Polar residues-rich tracts occupy residues 78-87 (YATNNSQSGP) and 99-121 (RGMSQSRYSNSNVHNTLASSSGS). Residues 230–569 (ILLPRISYDR…ALDHANFPEL (340 aa)) form a binds RNA region. Residues 356-569 (KKLQKLQENL…ALDHANFPEL (214 aa)) are binds SHG1. S625 carries the phosphoserine modification. The segment at 646–729 (AHLLNEETDS…DQNGSSDVLD (84 aa)) is disordered. A compositionally biased stretch (acidic residues) spans 674 to 692 (DEEDENMTSSSSEEEEEEA). The span at 693-712 (PDKKFKSESEPTTPESDHLH) shows a compositional bias: basic and acidic residues. The binds SPP1 stretch occupies residues 762-938 (MDLQNAIKDE…SLNQLNKRKK (177 aa)). The contributes to RNA binding stretch occupies residues 762-938 (MDLQNAIKDE…SLNQLNKRKK (177 aa)). A required for catalytic activity region spans residues 762–938 (MDLQNAIKDE…SLNQLNKRKK (177 aa)). T875 is modified (phosphothreonine). Basic and acidic residues-rich tracts occupy residues 877 to 890 (ELCQREESSNKEPS) and 899 to 909 (SSRDNRASNRR). The interval 877–909 (ELCQREESSNKEPSDSVPQEVSSSRDNRASNRR) is disordered. The RxxxRR motif signature appears at 904 to 909 (RASNRR). In terms of domain architecture, SET spans 938-1055 (KPVMFARSAI…ASEELTYDYK (118 aa)). Y1054 serves as a coordination point for S-adenosyl-L-methionine. The Post-SET domain occupies 1064 to 1080 (ERLPCLCGAPNCKGFLN).

It belongs to the class V-like SAM-binding methyltransferase superfamily. In terms of assembly, component of the Set1C/COMPASS complex which consists of SET1(2), BRE2(2), SPP1(2), SDC1(1), SHG1(1), SWD1(1), SWD2(1), and SWD3(1). Interacts with MEC3.

The protein resides in the nucleus. Its subcellular location is the chromosome. The catalysed reaction is L-lysyl(4)-[histone H3] + 3 S-adenosyl-L-methionine = N(6),N(6),N(6)-trimethyl-L-lysyl(4)-[histone H3] + 3 S-adenosyl-L-homocysteine + 3 H(+). The enzyme catalyses N(6)-methyl-L-lysyl(4)-[histone H3] + S-adenosyl-L-methionine = N(6),N(6)-dimethyl-L-lysyl(4)-[histone H3] + S-adenosyl-L-homocysteine + H(+). It carries out the reaction N(6),N(6)-dimethyl-L-lysyl(4)-[histone H3] + S-adenosyl-L-methionine = N(6),N(6),N(6)-trimethyl-L-lysyl(4)-[histone H3] + S-adenosyl-L-homocysteine + H(+). Functionally, catalytic component of the COMPASS (Set1C) complex that specifically mono-, di- and trimethylates histone H3 to form H3K4me1/2/3. Binds RNAs involved in chromosome segregation, splicing and transcriptional regulation; appears to bind transcripts both co- and post-transcriptionally and binding might negatively affect its histone methyltransferase activity. COMPASS recognizes ubiquitinated H2B on one face of the nucleosome which stimulates the methylation of H3 on the opposing face. Plays a role in telomere length maintenance and transcription elongation regulation. The polypeptide is Histone-lysine N-methyltransferase, H3 lysine-4 specific (Saccharomyces cerevisiae (strain ATCC 204508 / S288c) (Baker's yeast)).